We begin with the raw amino-acid sequence, 161 residues long: Chaperone protein dnaJ 11, chloroplastic (161 aa).

The segment covering 1–18 (MLSSSPTSFTHPFLSSSP) has biased composition (low complexity). Residues 1-31 (MLSSSPTSFTHPFLSSSPPLSPISPPSRTAR) form a disordered region. The transit peptide at 1–36 (MLSSSPTSFTHPFLSSSPPLSPISPPSRTARISPPL) directs the protein to the chloroplast. The 69-residue stretch at 65 to 133 (SLYDVLEVPL…EKRSVYDRRM (69 aa)) folds into the J domain.

The protein belongs to the DnaJ family. C/III subfamily. Expressed in roots, stems, leaves, flowers and developing siliques.

Its subcellular location is the plastid. It is found in the chloroplast stroma. In terms of biological role, plays a continuous role in plant development probably in the structural organization of compartments. This Arabidopsis thaliana (Mouse-ear cress) protein is Chaperone protein dnaJ 11, chloroplastic (ATJ11).